The primary structure comprises 145 residues: NDVITVQTPAFAESVTEGDVRVEGGTPLFTLRHNLKLGFMSAFVKASAFALQEQPVVNAVIDDATKEVVYRDYIDISVAVATPRGLVVPVIRNVETMNYADIERVEVRPMMYVALTYDHRLIDGREAVTFLRAAVEDPRVLLLDL.

Positions 4 to 31 (ITVQTPAFAESVTEGDVRVEGGTPLFTL) constitute a Lipoyl-binding domain. Serine 14 carries the phosphoserine modification. An N6-acetyllysine mark is found at lysine 36 and lysine 66. Active-site residues include histidine 119 and aspartate 123.

It belongs to the 2-oxoacid dehydrogenase family. As to quaternary structure, the 2-oxoglutarate dehydrogenase complex is composed of OGDH (2-oxoglutarate dehydrogenase; E1), DLST (dihydrolipoamide succinyltransferase; E2), DLD (dihydrolipoamide dehydrogenase; E3) and the assembly factor KGD4. It contains multiple copies of the three enzymatic components (E1, E2 and E3). In the nucleus, the 2-oxoglutarate dehydrogenase complex associates with KAT2A. Interacts with ABHD11; this interaction maintains the functional lipoylation of the 2-oxoglutarate dehydrogenase complex. (R)-lipoate serves as cofactor.

The protein localises to the mitochondrion matrix. The protein resides in the nucleus. It carries out the reaction N(6)-[(R)-dihydrolipoyl]-L-lysyl-[protein] + succinyl-CoA = N(6)-[(R)-S(8)-succinyldihydrolipoyl]-L-lysyl-[protein] + CoA. The protein operates within amino-acid degradation; L-lysine degradation via saccharopine pathway; glutaryl-CoA from L-lysine: step 6/6. Its pathway is carbohydrate metabolism; tricarboxylic acid cycle. Its function is as follows. Dihydrolipoamide succinyltransferase (E2) component of the 2-oxoglutarate dehydrogenase complex. The 2-oxoglutarate dehydrogenase complex catalyzes the overall conversion of 2-oxoglutarate to succinyl-CoA and CO(2). The 2-oxoglutarate dehydrogenase complex is mainly active in the mitochondrion. A fraction of the 2-oxoglutarate dehydrogenase complex also localizes in the nucleus and is required for lysine succinylation of histones: associates with KAT2A on chromatin and provides succinyl-CoA to histone succinyltransferase KAT2A. The chain is Dihydrolipoyllysine-residue succinyltransferase component of 2-oxoglutarate dehydrogenase complex, mitochondrial from Mesocricetus auratus (Golden hamster).